The following is a 351-amino-acid chain: Photosystem II D2 protein (351 aa).

A helical membrane pass occupies residues Thr39–Thr59. His116 is a binding site for chlorophyll a. Residues Gly123–Pro139 traverse the membrane as a helical segment. Pheophytin a is bound by residues Gln128 and Asn141. Residues Val151 to His164 traverse the membrane as a helical segment. His196 provides a ligand contact to chlorophyll a. The helical transmembrane segment at Gly206–Ala226 threads the bilayer. The a plastoquinone site is built by His213 and Phe260. Position 213 (His213) interacts with Fe cation. His267 contributes to the Fe cation binding site. The chain crosses the membrane as a helical span at residues Gly277 to Arg293.

It belongs to the reaction center PufL/M/PsbA/D family. In terms of assembly, PSII is composed of 1 copy each of membrane proteins PsbA, PsbB, PsbC, PsbD, PsbE, PsbF, PsbH, PsbI, PsbJ, PsbK, PsbL, PsbM, PsbT, PsbX, PsbY, Psb30/Ycf12, peripheral proteins PsbO, CyanoQ (PsbQ), PsbU, PsbV and a large number of cofactors. It forms dimeric complexes. The cofactor is The D1/D2 heterodimer binds P680, chlorophylls that are the primary electron donor of PSII, and subsequent electron acceptors. It shares a non-heme iron and each subunit binds pheophytin, quinone, additional chlorophylls, carotenoids and lipids. There is also a Cl(-1) ion associated with D1 and D2, which is required for oxygen evolution. The PSII complex binds additional chlorophylls, carotenoids and specific lipids..

It is found in the cellular thylakoid membrane. It catalyses the reaction 2 a plastoquinone + 4 hnu + 2 H2O = 2 a plastoquinol + O2. Its function is as follows. Photosystem II (PSII) is a light-driven water:plastoquinone oxidoreductase that uses light energy to abstract electrons from H(2)O, generating O(2) and a proton gradient subsequently used for ATP formation. It consists of a core antenna complex that captures photons, and an electron transfer chain that converts photonic excitation into a charge separation. The D1/D2 (PsbA/PsbD) reaction center heterodimer binds P680, the primary electron donor of PSII as well as several subsequent electron acceptors. D2 is needed for assembly of a stable PSII complex. In Prochlorococcus marinus (strain MIT 9313), this protein is Photosystem II D2 protein.